The primary structure comprises 345 residues: Transcription factor MYB106 (345 aa).

HTH myb-type domains lie at 9–61 and 62–116; these read KAGL…TNYL and RPDI…KKRL. DNA-binding regions (H-T-H motif) lie at residues 37-61 and 89-112; these read WRSLPEKAGLQRCGKSCRLRWTNYL and WSAIATHLPKRTDNEIKNYWNTHL.

Expressed in trichomes, stems, carpels, petals and stamens.

Its subcellular location is the nucleus. Functions as a repressor of epidermal cell outgrowth and negatively regulate trichome branch formation. Acts both as a positive and a negative regulator of cellular outgrowth. Promotes both trichome expansion and branch formation. Coordinately with WIN1/SHN1, participates in the regulation of cuticle biosynthesis and wax accumulation in reproductive organs and trichomes. Functions in cuticle nanoridge formation in petals and stamens, and in morphogenesis of petal conical cells and trichomes. May play a role in the regulation of cuticle formation in vegetative organs. The polypeptide is Transcription factor MYB106 (Arabidopsis thaliana (Mouse-ear cress)).